The primary structure comprises 165 residues: Pro-MCH (165 aa).

The N-terminal stretch at Met1–Gly21 is a signal peptide. Ile143 carries the post-translational modification Isoleucine amide. A disulfide bond links Cys153 and Cys162.

The protein belongs to the melanin-concentrating hormone family. Differentially processed in the brain and in peripheral organs producing two neuropeptides; NEI and MCH. A third peptide, NGE, may also be produced. Preferential processing in neurons by prohormone convertase 2 (PC2) generates NEI. MCH is generated in neurons of the lateral hypothalmic area by several prohormone convertases including PC1/3, PC2 and PC5/6. In terms of tissue distribution, predominantly expressed in lateral hypothalamus, also detected in pallidum, neocortex and cerebellum. Also found in thymus, brown adipose tissue, duodenum and testis (spermatogonia, early spermatocytes and Sertoli cells). No expression in peripheral blood. In brain exclusively mature MCH and NEI peptides are present. In peripheral tissues a large product, encompassing the NEI and MCH domains of the precursor, is found predominantly.

It localises to the secreted. Its function is as follows. MCH may act as a neurotransmitter or neuromodulator in a broad array of neuronal functions directed toward the regulation of goal-directed behavior, such as food intake, and general arousal. May also have a role in spermatocyte differentiation. The chain is Pro-MCH (PMCH) from Homo sapiens (Human).